A 358-amino-acid chain; its full sequence is MDLPVSAIGFEGFEKRLEISFVEPGLFADPNGKGLRSLTKAQLDEILGPAECTIVDNLSNDYVDSYVLSESSLFVYSYKIIIKTCGTTKLLLAIPPILRLAETLSLKVQDVRYTRGSFIFPGAQSFPHRHFSEEVAVLDGYFGKLAAGSKAVIMGNPDKTQKWHVYSASAGTVQCNDPVYTLEMCMAGLDREKASVFYKTEESSAAHMTVRSGIRKILPKFEICDFEFEPCGYSMNSIEGAAVSTIHITPEDGFSYASFESVGYDPKTTELGPLVERVLACFEPAEFSIALHADVATKLLERVCSVDVKGYSLAEWSPEEFGKGGSIVYQKFTRTPYCESPKSVLKGCWKEEEKEEKE.

Catalysis depends on residues Glu-11 and Glu-14. The active-site Schiff-base intermediate with substrate; via pyruvic acid is Ser-71. Ser-71 carries the pyruvic acid (Ser); by autocatalysis modification. Cys-85 acts as the Proton donor; for catalytic activity in catalysis. Residues Ser-234 and His-247 each act as proton acceptor; for processing activity in the active site.

The protein belongs to the eukaryotic AdoMetDC family. It depends on pyruvate as a cofactor. Post-translationally, is synthesized initially as an inactive proenzyme. Formation of the active enzyme involves a self-maturation process in which the active site pyruvoyl group is generated from an internal serine residue via an autocatalytic post-translational modification. Two non-identical subunits are generated from the proenzyme in this reaction, and the pyruvate is formed at the N-terminus of the alpha chain, which is derived from the carboxyl end of the proenzyme. The post-translation cleavage follows an unusual pathway, termed non-hydrolytic serinolysis, in which the side chain hydroxyl group of the serine supplies its oxygen atom to form the C-terminus of the beta chain, while the remainder of the serine residue undergoes an oxidative deamination to produce ammonia and the pyruvoyl group blocking the N-terminus of the alpha chain.

It catalyses the reaction S-adenosyl-L-methionine + H(+) = S-adenosyl 3-(methylsulfanyl)propylamine + CO2. Its pathway is amine and polyamine biosynthesis; S-adenosylmethioninamine biosynthesis; S-adenosylmethioninamine from S-adenosyl-L-methionine: step 1/1. The polypeptide is S-adenosylmethionine decarboxylase proenzyme (SAMDC) (Solanum chilense (Tomato)).